The primary structure comprises 415 residues: Probable RAD2-like endonuclease 369L (415 aa).

The tract at residues 1 to 114 (MGIKNLTKFI…EDVKKKTLSL (114 aa)) is N-domain. Positions 34, 86, 198, 200, 219, 221, and 277 each coordinate Mg(2+). An I-domain region spans residues 163–297 (VKQRHRYDIR…VKSYELIKVQ (135 aa)).

This sequence belongs to the XPG/RAD2 endonuclease family. It depends on Mg(2+) as a cofactor.

The protein resides in the host nucleus. Functionally, probable endonuclease. The sequence is that of Probable RAD2-like endonuclease 369L from Acheta domesticus (House cricket).